The following is a 483-amino-acid chain: Aspartyl/glutamyl-tRNA(Asn/Gln) amidotransferase subunit B (483 aa).

The protein belongs to the GatB/GatE family. GatB subfamily. Heterotrimer of A, B and C subunits.

The catalysed reaction is L-glutamyl-tRNA(Gln) + L-glutamine + ATP + H2O = L-glutaminyl-tRNA(Gln) + L-glutamate + ADP + phosphate + H(+). It carries out the reaction L-aspartyl-tRNA(Asn) + L-glutamine + ATP + H2O = L-asparaginyl-tRNA(Asn) + L-glutamate + ADP + phosphate + 2 H(+). Functionally, allows the formation of correctly charged Asn-tRNA(Asn) or Gln-tRNA(Gln) through the transamidation of misacylated Asp-tRNA(Asn) or Glu-tRNA(Gln) in organisms which lack either or both of asparaginyl-tRNA or glutaminyl-tRNA synthetases. The reaction takes place in the presence of glutamine and ATP through an activated phospho-Asp-tRNA(Asn) or phospho-Glu-tRNA(Gln). The chain is Aspartyl/glutamyl-tRNA(Asn/Gln) amidotransferase subunit B from Rickettsia africae (strain ESF-5).